A 359-amino-acid chain; its full sequence is Membrane-bound lytic murein transglycosylase C (359 aa).

The first 16 residues, Met-1–Ser-16, serve as a signal peptide directing secretion. The N-palmitoyl cysteine moiety is linked to residue Cys-17. A lipid anchor (S-diacylglycerol cysteine) is attached at Cys-17.

The protein belongs to the transglycosylase Slt family.

It localises to the cell outer membrane. The enzyme catalyses Exolytic cleavage of the (1-&gt;4)-beta-glycosidic linkage between N-acetylmuramic acid (MurNAc) and N-acetylglucosamine (GlcNAc) residues in peptidoglycan, from either the reducing or the non-reducing ends of the peptidoglycan chains, with concomitant formation of a 1,6-anhydrobond in the MurNAc residue.. In terms of biological role, murein-degrading enzyme. May play a role in recycling of muropeptides during cell elongation and/or cell division. The chain is Membrane-bound lytic murein transglycosylase C from Escherichia coli O139:H28 (strain E24377A / ETEC).